The primary structure comprises 1008 residues: Chitin synthase C (1008 aa).

Residues 1–160 are disordered; that stretch reads MIYEMMVMKR…GGRTIDPNNR (160 aa). The segment covering 10–19 has biased composition (low complexity); that stretch reads RSANSRAQNN. Residues 34-45 show a composition bias toward polar residues; that stretch reads ESPSRPVSSLGN. A glycan (N-linked (GlcNAc...) asparagine) is linked at asparagine 312. Helical transmembrane passes span 642 to 662, 682 to 702, 717 to 737, 755 to 775, and 787 to 807; these read FMQLIFTYFGLANFYLVFYFI, IFVILRYACILVMCLQFIISM, IIVYSIIMFYTIFCTMYLVVI, LFVNIVMSLLSTVGLYFYASF, and SAAYFIMLPSYICTLQVYAFC. A glycan (N-linked (GlcNAc...) asparagine) is linked at asparagine 833. A run of 2 helical transmembrane segments spans residues 887–907 and 910–930; these read MVSIWMVANVILAMAISEVYG and AGGTNIYLAIILWSVVVLALI. An N-linked (GlcNAc...) asparagine glycan is attached at asparagine 961.

This sequence belongs to the chitin synthase family. Class II subfamily.

The protein localises to the cell membrane. The enzyme catalyses [(1-&gt;4)-N-acetyl-beta-D-glucosaminyl](n) + UDP-N-acetyl-alpha-D-glucosamine = [(1-&gt;4)-N-acetyl-beta-D-glucosaminyl](n+1) + UDP + H(+). Functionally, polymerizes chitin, a structural polymer of the cell wall and septum, by transferring the sugar moiety of UDP-GlcNAc to the non-reducing end of the growing chitin polymer. Involved in cell wall integrity and mycelial morphology. Plays an important role in septal growth or maintenance. Acts as a positive regulator of conidiation, cellular responses to oxidative stresses, and the production of malic acid. Negatively regulates the citric acid production. The protein is Chitin synthase C of Aspergillus niger (strain ATCC MYA-4892 / CBS 513.88 / FGSC A1513).